Here is a 280-residue protein sequence, read N- to C-terminus: Inner kinetochore subunit fta1 (280 aa).

This sequence belongs to the CENP-L/IML3 family. In terms of assembly, component of the inner kinetochore constitutive centromere-associated network (CCAN) (also known as central kinetochore Sim4 complex in fission yeast), which is composed of at least cnl2, cnp3, cnp20, fta1, fta2, fta3, fta4, fta6, fta7, mal2, mhf1, mhf2, mis6, mis15, mis17, sim4 and wip1.

The protein localises to the nucleus. It is found in the chromosome. The protein resides in the centromere. Its subcellular location is the kinetochore. Component of the kinetochore, a multiprotein complex that assembles on centromeric DNA and attaches chromosomes to spindle microtubules, mediating chromosome segregation and sister chromatid segregation during meiosis and mitosis. Component of the inner kinetochore constitutive centromere-associated network (CCAN), which serves as a structural platform for outer kinetochore assembly. The chain is Inner kinetochore subunit fta1 (fta1) from Schizosaccharomyces pombe (strain 972 / ATCC 24843) (Fission yeast).